A 394-amino-acid chain; its full sequence is MAKEKFERTKPHVNIGTIGHVDHGKTTLTAAITTVLAKKGLSELRSFDSIDNAPEEKERGITINTSHVEYETANRHYAHVDCPGHADYVKNMVTGAAQMDGAIIVCAATDGPMPQTREHILLARQVNVPRLVVFLNKCDMVDDEEMLELVEMEMRELLSFYDFDGDNTPIIQGSALGALNGVEKWEDKVMELMDAVDNWIPLPPRDVDKPFLMPVEDVFSITGRGTVATGRIESGIIHVGDEVEILGLGEDKKSVVTGVEMFRKLLDQGEAGDNVGLLLRGVDKNEIKRGMVLCKPGQIKPHSRFKAEVYILKKEEGGRHTPFHNKYRPQFYLRTMDCTGEITLPEGTEMVMPGDNVTITVELIYPVALNPGLRFAIREGGRTVGAGQITEIID.

The 196-residue stretch at 10 to 205 (KPHVNIGTIG…VDNWIPLPPR (196 aa)) folds into the tr-type G domain. The tract at residues 19–26 (GHVDHGKT) is G1. 19 to 26 (GHVDHGKT) lines the GTP pocket. Residue threonine 26 coordinates Mg(2+). The tract at residues 60–64 (GITIN) is G2. A G3 region spans residues 81 to 84 (DCPG). GTP contacts are provided by residues 81–85 (DCPGH) and 136–139 (NKCD). The G4 stretch occupies residues 136-139 (NKCD). The interval 174–176 (SAL) is G5.

This sequence belongs to the TRAFAC class translation factor GTPase superfamily. Classic translation factor GTPase family. EF-Tu/EF-1A subfamily. As to quaternary structure, monomer.

It is found in the cytoplasm. It carries out the reaction GTP + H2O = GDP + phosphate + H(+). Functionally, GTP hydrolase that promotes the GTP-dependent binding of aminoacyl-tRNA to the A-site of ribosomes during protein biosynthesis. The polypeptide is Elongation factor Tu (Bacteroides thetaiotaomicron (strain ATCC 29148 / DSM 2079 / JCM 5827 / CCUG 10774 / NCTC 10582 / VPI-5482 / E50)).